Reading from the N-terminus, the 434-residue chain is Acyl transferase 15 (434 aa).

Residues H164 and D371 each act as proton acceptor in the active site.

Belongs to the plant acyltransferase family.

Involved in the incorporation of ferulate into the cell wall. In Oryza sativa subsp. japonica (Rice), this protein is Acyl transferase 15.